Consider the following 443-residue polypeptide: Tubulin beta-3 chain (443 aa).

Residues Q11, E69, S138, G142, T143, G144, N204, and N226 each contribute to the GTP site. Position 69 (E69) interacts with Mg(2+).

The protein belongs to the tubulin family. In terms of assembly, dimer of alpha and beta chains. A typical microtubule is a hollow water-filled tube with an outer diameter of 25 nm and an inner diameter of 15 nM. Alpha-beta heterodimers associate head-to-tail to form protofilaments running lengthwise along the microtubule wall with the beta-tubulin subunit facing the microtubule plus end conferring a structural polarity. Microtubules usually have 13 protofilaments but different protofilament numbers can be found in some organisms and specialized cells. Mg(2+) serves as cofactor.

The protein localises to the cytoplasm. The protein resides in the cytoskeleton. In terms of biological role, tubulin is the major constituent of microtubules, a cylinder consisting of laterally associated linear protofilaments composed of alpha- and beta-tubulin heterodimers. Microtubules grow by the addition of GTP-tubulin dimers to the microtubule end, where a stabilizing cap forms. Below the cap, tubulin dimers are in GDP-bound state, owing to GTPase activity of alpha-tubulin. The chain is Tubulin beta-3 chain (TUB-3) from Echinococcus multilocularis (Fox tapeworm).